We begin with the raw amino-acid sequence, 86 residues long: Small ribosomal subunit protein uS17 (86 aa).

The protein belongs to the universal ribosomal protein uS17 family. Part of the 30S ribosomal subunit.

Its function is as follows. One of the primary rRNA binding proteins, it binds specifically to the 5'-end of 16S ribosomal RNA. This is Small ribosomal subunit protein uS17 from Roseiflexus castenholzii (strain DSM 13941 / HLO8).